A 224-amino-acid chain; its full sequence is Putative O-methyltransferase MLBr01075 (224 aa).

Residues V51, E73, 75–76 (GT), S81, D99, and I100 contribute to the S-adenosyl-L-methionine site. D147 serves as a coordination point for substrate. Residue D149 participates in S-adenosyl-L-methionine binding.

Belongs to the class I-like SAM-binding methyltransferase superfamily. Cation-dependent O-methyltransferase family.

This chain is Putative O-methyltransferase MLBr01075, found in Mycobacterium leprae (strain Br4923).